A 270-amino-acid polypeptide reads, in one-letter code: Methylthioribulose-1-phosphate dehydratase (270 aa).

C122 is a substrate binding site. Zn(2+)-binding residues include H140 and H142. Catalysis depends on E165, which acts as the Proton donor/acceptor. Zn(2+) is bound at residue H230.

The protein belongs to the aldolase class II family. MtnB subfamily. Zn(2+) is required as a cofactor.

It localises to the cytoplasm. It carries out the reaction 5-(methylsulfanyl)-D-ribulose 1-phosphate = 5-methylsulfanyl-2,3-dioxopentyl phosphate + H2O. Its pathway is amino-acid biosynthesis; L-methionine biosynthesis via salvage pathway; L-methionine from S-methyl-5-thio-alpha-D-ribose 1-phosphate: step 2/6. Catalyzes the dehydration of methylthioribulose-1-phosphate (MTRu-1-P) into 2,3-diketo-5-methylthiopentyl-1-phosphate (DK-MTP-1-P). This chain is Methylthioribulose-1-phosphate dehydratase, found in Candida albicans (strain WO-1) (Yeast).